A 233-amino-acid polypeptide reads, in one-letter code: Probable translation initiation factor, mitochondrial (233 aa).

Residues 1–39 (MNSYLQFPHRKLFIQFSYSLTSVFRKCQSRTFMNSQFAS) constitute a mitochondrion transit peptide.

Belongs to the IF-3 family.

The protein localises to the mitochondrion. In terms of biological role, may be involved in mitochondrial translation initiation. The sequence is that of Probable translation initiation factor, mitochondrial from Schizosaccharomyces pombe (strain 972 / ATCC 24843) (Fission yeast).